Reading from the N-terminus, the 201-residue chain is Proteasome subunit beta type-2 (201 aa).

Residue methionine 1 is modified to N-acetylmethionine.

It belongs to the peptidase T1B family. In terms of assembly, the 26S proteasome consists of a 20S proteasome core and two 19S regulatory subunits. The 20S proteasome core is a barrel-shaped complex made of 28 subunits that are arranged in four stacked rings. The two outer rings are each formed by seven alpha subunits, and the two inner rings are formed by seven beta subunits. The proteolytic activity is exerted by three beta-subunits PSMB5, PSMB6 and PSMB7. As to quaternary structure, (Microbial infection) Interacts with HIV-1 protein Tat.

Its subcellular location is the cytoplasm. The protein localises to the nucleus. Its function is as follows. Non-catalytic component of the 20S core proteasome complex involved in the proteolytic degradation of most intracellular proteins. This complex plays numerous essential roles within the cell by associating with different regulatory particles. Associated with two 19S regulatory particles, forms the 26S proteasome and thus participates in the ATP-dependent degradation of ubiquitinated proteins. The 26S proteasome plays a key role in the maintenance of protein homeostasis by removing misfolded or damaged proteins that could impair cellular functions, and by removing proteins whose functions are no longer required. Associated with the PA200 or PA28, the 20S proteasome mediates ubiquitin-independent protein degradation. This type of proteolysis is required in several pathways including spermatogenesis (20S-PA200 complex) or generation of a subset of MHC class I-presented antigenic peptides (20S-PA28 complex). This Homo sapiens (Human) protein is Proteasome subunit beta type-2.